The chain runs to 351 residues: MASRSLSYTQLLGLLSFILLLVTTTTMAVRVGVILHKPSAPTLPVFREAPAFRNGDQCGTREADQIHIAMTLDTNYLRGTMAAVLSLLQHSTCPENLSFHFLSLPHFENDLFTSIKSTFPYLNFKIYQFDPNLVRSKISKSIRQALDQPLNYARIYLADIIPSSVDRIIYLDSDLVVVDDIEKLWHVEMEGKVVAAPEYCHANFTHYFTRTFWSDPVLVKVLEGKRPCYFNTGVMVVDVNKWRKGMYTQKVEEWMTIQKQKRIYHLGSLPPFLLIFAGDIKAVNHRWNQHGLGGDNFEGRCRTLHPGPISLLHWSGKGKPWLRLDSRKPCIVDHLWAPYDLYRSSRHSLEE.

Residues Met-1–Tyr-8 are Cytoplasmic-facing. Residues Thr-9 to Val-29 traverse the membrane as a helical; Signal-anchor for type II membrane protein segment. The Lumenal portion of the chain corresponds to Arg-30–Glu-351. N-linked (GlcNAc...) asparagine glycans are attached at residues Asn-96 and Asn-203.

Belongs to the glycosyltransferase 8 family.

The protein resides in the golgi apparatus membrane. The protein operates within glycan metabolism; pectin biosynthesis. Its function is as follows. May be involved in pectin and/or xylans biosynthesis in cell walls. The chain is Probable galacturonosyltransferase-like 4 (GATL4) from Arabidopsis thaliana (Mouse-ear cress).